The chain runs to 376 residues: MKIVADENMPYVEALFADLGEVVMVDGRTLTQAQVKDADVLLVRSVTKVNKSLLDGCDRLSFVGSATIGMDHLDLDYLKQRGIFCTNAPGCNAVAVGEYAFNAMLELARRFHNPLKGKTVGIVGAGNTGTALQKCLEAYGVKTLLNDPLLEQSGDEREFVSLDELIERCDVISLHVPLTRDGEHPTHYLFDKRRLNALAEDTWLLNCCRGEVIDNRALIEVKQQRSDLKLVLDVWEGEPLPMPELVPLVEVATPHIAGYSLEGKARGTFMLYQALMAQLGRAVDKSLASLLPPLWSHQLSPLSVPDEKALLCLVRLVYDLRDDDELFRQRFQNNKGFDLMRKNHKHRREFSALMLANTAGSDVDWLLELGFSGVGL.

Substrate is bound by residues Ser-45 and Thr-67. Asp-147 contacts NAD(+). Arg-209 is an active-site residue. Asp-233 contributes to the NAD(+) binding site. Glu-238 is an active-site residue. His-255 (proton donor) is an active-site residue. Gly-258 is an NAD(+) binding site. Tyr-259 lines the substrate pocket.

It belongs to the D-isomer specific 2-hydroxyacid dehydrogenase family. PdxB subfamily. In terms of assembly, homodimer.

Its subcellular location is the cytoplasm. The enzyme catalyses 4-phospho-D-erythronate + NAD(+) = (R)-3-hydroxy-2-oxo-4-phosphooxybutanoate + NADH + H(+). It functions in the pathway cofactor biosynthesis; pyridoxine 5'-phosphate biosynthesis; pyridoxine 5'-phosphate from D-erythrose 4-phosphate: step 2/5. Catalyzes the oxidation of erythronate-4-phosphate to 3-hydroxy-2-oxo-4-phosphonooxybutanoate. In Shewanella loihica (strain ATCC BAA-1088 / PV-4), this protein is Erythronate-4-phosphate dehydrogenase.